The following is a 284-amino-acid chain: Bifunctional protein FolD 1 (284 aa).

Residues Gly166–Ser168 and Ile232 each bind NADP(+).

The protein belongs to the tetrahydrofolate dehydrogenase/cyclohydrolase family. In terms of assembly, homodimer.

It carries out the reaction (6R)-5,10-methylene-5,6,7,8-tetrahydrofolate + NADP(+) = (6R)-5,10-methenyltetrahydrofolate + NADPH. The enzyme catalyses (6R)-5,10-methenyltetrahydrofolate + H2O = (6R)-10-formyltetrahydrofolate + H(+). It participates in one-carbon metabolism; tetrahydrofolate interconversion. Functionally, catalyzes the oxidation of 5,10-methylenetetrahydrofolate to 5,10-methenyltetrahydrofolate and then the hydrolysis of 5,10-methenyltetrahydrofolate to 10-formyltetrahydrofolate. This chain is Bifunctional protein FolD 1, found in Pseudomonas savastanoi pv. phaseolicola (strain 1448A / Race 6) (Pseudomonas syringae pv. phaseolicola (strain 1448A / Race 6)).